Here is a 729-residue protein sequence, read N- to C-terminus: MSCCDLAAAGQLGKAGIMASDCEPALNQAESRNPTLERYLGALREAKNDSEQFAALLLVTKAVKAGDIDAKTRRRIFDAVGFTFPNRLLTTKEAPDGCPDHVLRALGVALLACFCSDPELAAHPQVLNKIPILSTFLTARGDPDDAARRSMVDDTYQCLTAVAGTPRGPRHLIAGGTVSALCQAYLGHGYGFDQALALLVGLLAAAETQCWKEAEPDLLAVLRGLSEDFQKAEDASKFELCQLLPLFLPPTTVPSECLRDLQAGLARILGSKLSSWQRNPALKLAARLAHACGSDWIPAGNSGSKFLALLVNLACVEVRLALEETGTEVKEDVVTACYALMELGIQECTRCEQSLLKEPQKVQLVSIMKEAIGAVIHYLQQVGPEKQKEPFVFASVRILGAWLAEETSSLRKEVCQLLPFLVRYAKTLYEEAEEANDLSQQVATLAISPTTPGPTWPGDALRLLLPGWCHLTVEDGPREILIKEGAPSLLCKYFLQQWELTSPGHDTSVLPDSVEIGLQTCCHIFLNLVVTAPGLIKRDACFTSLMNTLMASLPSLVQQQGRLLLAANVATLGLLMARLLSTSPALQGTPASRGFFAAAILFLSQSHVARATPGSEQAVLALSPDYEGVWADLQELWFLGMQAFTGCVPLLPWLAPAALRSRWPQELLQLLGSVSPNSVKPEMVAAYQGVLVELARANRLCREAMRLQAGEETASHYRMAALEQCLAEP.

Ser-2 carries the post-translational modification N-acetylserine. Phosphoserine is present on Ser-2. S-palmitoyl cysteine attachment occurs at residues Cys-3 and Cys-4. Arg-75 carries the asymmetric dimethylarginine modification. Ser-448 carries the post-translational modification Phosphoserine.

The protein belongs to the neurochondrin family. Interacts with MCHR1. Interacts with SEMA4C. Interacts with DIAPH1 (via FH3 domain). Interacts with GRM5. In terms of processing, palmitoylated. Palmitoylation by ZDHHC1, ZDHHC3 and ZDHHC11 regulates the association of NCDN with endosome membranes. May also be palmitoylated by ZDHHC7.

It localises to the cytoplasm. Its subcellular location is the cytosol. It is found in the endosome membrane. The protein resides in the cell projection. The protein localises to the dendrite. It localises to the postsynapse. Probably involved in signal transduction, in the nervous system, via increasing cell surface localization of GRM5 and positively regulating its signaling. Required for the spatial learning process. Acts as a negative regulator of Ca(2+)-calmodulin-dependent protein kinase 2 (CaMK2) phosphorylation. May play a role in modulating melanin-concentrating hormone-mediated functions via its interaction with MCHR1 that interferes with G protein-coupled signal transduction. May be involved in bone metabolism. May also be involved in neurite outgrowth. The sequence is that of Neurochondrin (NCDN) from Bos taurus (Bovine).